Reading from the N-terminus, the 686-residue chain is Catalase-2 (686 aa).

Over residues 1–27 the composition is skewed to basic and acidic residues; the sequence is MSDDQNKRVNEHSKDEQLEQYRTDNSG. The disordered stretch occupies residues 1–43; it reads MSDDQNKRVNEHSKDEQLEQYRTDNSGKKMTTNQGLRVSEDEH. Active-site residues include H78 and N151. Y365 is a heme binding site.

Belongs to the catalase family. HPII subfamily. Heme serves as cofactor.

It catalyses the reaction 2 H2O2 = O2 + 2 H2O. Its function is as follows. Decomposes hydrogen peroxide into water and oxygen; serves to protect cells from the toxic effects of hydrogen peroxide. Involved in sporulation. The protein is Catalase-2 (katE) of Bacillus subtilis (strain 168).